The following is an 802-amino-acid chain: Valine--tRNA ligase (802 aa).

A 'HIGH' region motif is present at residues 45 to 55 (PTISGQLHIGH). The 'KMSKS' region motif lies at 524–528 (KMSKS). Residue Lys-527 participates in ATP binding.

This sequence belongs to the class-I aminoacyl-tRNA synthetase family. ValS type 2 subfamily. Monomer.

It localises to the cytoplasm. It catalyses the reaction tRNA(Val) + L-valine + ATP = L-valyl-tRNA(Val) + AMP + diphosphate. In terms of biological role, catalyzes the attachment of valine to tRNA(Val). As ValRS can inadvertently accommodate and process structurally similar amino acids such as threonine, to avoid such errors, it has a 'posttransfer' editing activity that hydrolyzes mischarged Thr-tRNA(Val) in a tRNA-dependent manner. This is Valine--tRNA ligase from Ehrlichia canis (strain Jake).